The chain runs to 197 residues: Holliday junction branch migration complex subunit RuvA (197 aa).

A domain I region spans residues 1 to 64; sequence MIGRLSGKLI…EDAHLLYGFA (64 aa). The domain II stretch occupies residues 65–143; sequence SKEERQTFRQ…TGGNLTVPGG (79 aa). The interval 143–147 is flexible linker; sequence GLPFA. The segment at 148–197 is domain III; it reads ATPDEKSDIVNALLALGYNEKEAAAATKSLPADVTVSEGVRLALKSLMKV.

This sequence belongs to the RuvA family. Homotetramer. Forms an RuvA(8)-RuvB(12)-Holliday junction (HJ) complex. HJ DNA is sandwiched between 2 RuvA tetramers; dsDNA enters through RuvA and exits via RuvB. An RuvB hexamer assembles on each DNA strand where it exits the tetramer. Each RuvB hexamer is contacted by two RuvA subunits (via domain III) on 2 adjacent RuvB subunits; this complex drives branch migration. In the full resolvosome a probable DNA-RuvA(4)-RuvB(12)-RuvC(2) complex forms which resolves the HJ.

It is found in the cytoplasm. The RuvA-RuvB-RuvC complex processes Holliday junction (HJ) DNA during genetic recombination and DNA repair, while the RuvA-RuvB complex plays an important role in the rescue of blocked DNA replication forks via replication fork reversal (RFR). RuvA specifically binds to HJ cruciform DNA, conferring on it an open structure. The RuvB hexamer acts as an ATP-dependent pump, pulling dsDNA into and through the RuvAB complex. HJ branch migration allows RuvC to scan DNA until it finds its consensus sequence, where it cleaves and resolves the cruciform DNA. The chain is Holliday junction branch migration complex subunit RuvA from Chromobacterium violaceum (strain ATCC 12472 / DSM 30191 / JCM 1249 / CCUG 213 / NBRC 12614 / NCIMB 9131 / NCTC 9757 / MK).